Here is a 508-residue protein sequence, read N- to C-terminus: Photosystem II CP47 reaction center protein (508 aa).

Transmembrane regions (helical) follow at residues S21–S36, I101–W115, G140–F156, I203–S218, V237–V252, and S457–R472.

Belongs to the PsbB/PsbC family. PsbB subfamily. PSII is composed of 1 copy each of membrane proteins PsbA, PsbB, PsbC, PsbD, PsbE, PsbF, PsbH, PsbI, PsbJ, PsbK, PsbL, PsbM, PsbT, PsbX, PsbY, PsbZ, Psb30/Ycf12, at least 3 peripheral proteins of the oxygen-evolving complex and a large number of cofactors. It forms dimeric complexes. Requires Binds multiple chlorophylls. PSII binds additional chlorophylls, carotenoids and specific lipids. as cofactor.

The protein resides in the plastid. It localises to the chloroplast thylakoid membrane. One of the components of the core complex of photosystem II (PSII). It binds chlorophyll and helps catalyze the primary light-induced photochemical processes of PSII. PSII is a light-driven water:plastoquinone oxidoreductase, using light energy to abstract electrons from H(2)O, generating O(2) and a proton gradient subsequently used for ATP formation. The chain is Photosystem II CP47 reaction center protein from Phaseolus vulgaris (Kidney bean).